Reading from the N-terminus, the 446-residue chain is Methylenetetrahydrofolate--tRNA-(uracil-5-)-methyltransferase TrmFO (446 aa).

11–16 is a binding site for FAD; sequence GGGLAG.

It belongs to the MnmG family. TrmFO subfamily. Requires FAD as cofactor.

The protein localises to the cytoplasm. The enzyme catalyses uridine(54) in tRNA + (6R)-5,10-methylene-5,6,7,8-tetrahydrofolate + NADH + H(+) = 5-methyluridine(54) in tRNA + (6S)-5,6,7,8-tetrahydrofolate + NAD(+). It catalyses the reaction uridine(54) in tRNA + (6R)-5,10-methylene-5,6,7,8-tetrahydrofolate + NADPH + H(+) = 5-methyluridine(54) in tRNA + (6S)-5,6,7,8-tetrahydrofolate + NADP(+). Functionally, catalyzes the folate-dependent formation of 5-methyl-uridine at position 54 (M-5-U54) in all tRNAs. This Oleidesulfovibrio alaskensis (strain ATCC BAA-1058 / DSM 17464 / G20) (Desulfovibrio alaskensis) protein is Methylenetetrahydrofolate--tRNA-(uracil-5-)-methyltransferase TrmFO.